The chain runs to 146 residues: MAFWTEKTLAEMTPTEWESLCDGCGKCCLNKLIDDETEELYYTNASCHLLNLETCSCKRYPERFEYVPECTAITVENIASLTWLPDSCAYRRLYLGRTLPSWHPLLTGSKDAMHKAGISVKDKIISEIKVRNIEEHIVLWPLKDID.

It belongs to the UPF0260 family.

The protein is UPF0260 protein Sden_1632 of Shewanella denitrificans (strain OS217 / ATCC BAA-1090 / DSM 15013).